The following is a 282-amino-acid chain: 4-hydroxy-3-methylbut-2-enyl diphosphate reductase (282 aa).

Cys12 contacts [4Fe-4S] cluster. (2E)-4-hydroxy-3-methylbut-2-enyl diphosphate-binding residues include His40 and His72. Dimethylallyl diphosphate is bound by residues His40 and His72. Isopentenyl diphosphate is bound by residues His40 and His72. Cys94 provides a ligand contact to [4Fe-4S] cluster. His122 contributes to the (2E)-4-hydroxy-3-methylbut-2-enyl diphosphate binding site. His122 is a binding site for dimethylallyl diphosphate. Residue His122 coordinates isopentenyl diphosphate. The active-site Proton donor is the Glu124. A (2E)-4-hydroxy-3-methylbut-2-enyl diphosphate-binding site is contributed by Thr160. Residue Cys188 coordinates [4Fe-4S] cluster. Residues Ser216, Asn218, and Ser260 each contribute to the (2E)-4-hydroxy-3-methylbut-2-enyl diphosphate site. 3 residues coordinate dimethylallyl diphosphate: Ser216, Asn218, and Ser260. Isopentenyl diphosphate contacts are provided by Ser216, Asn218, and Ser260.

Belongs to the IspH family. [4Fe-4S] cluster is required as a cofactor.

It carries out the reaction isopentenyl diphosphate + 2 oxidized [2Fe-2S]-[ferredoxin] + H2O = (2E)-4-hydroxy-3-methylbut-2-enyl diphosphate + 2 reduced [2Fe-2S]-[ferredoxin] + 2 H(+). The catalysed reaction is dimethylallyl diphosphate + 2 oxidized [2Fe-2S]-[ferredoxin] + H2O = (2E)-4-hydroxy-3-methylbut-2-enyl diphosphate + 2 reduced [2Fe-2S]-[ferredoxin] + 2 H(+). The protein operates within isoprenoid biosynthesis; dimethylallyl diphosphate biosynthesis; dimethylallyl diphosphate from (2E)-4-hydroxy-3-methylbutenyl diphosphate: step 1/1. It participates in isoprenoid biosynthesis; isopentenyl diphosphate biosynthesis via DXP pathway; isopentenyl diphosphate from 1-deoxy-D-xylulose 5-phosphate: step 6/6. Catalyzes the conversion of 1-hydroxy-2-methyl-2-(E)-butenyl 4-diphosphate (HMBPP) into a mixture of isopentenyl diphosphate (IPP) and dimethylallyl diphosphate (DMAPP). Acts in the terminal step of the DOXP/MEP pathway for isoprenoid precursor biosynthesis. This is 4-hydroxy-3-methylbut-2-enyl diphosphate reductase from Geotalea uraniireducens (strain Rf4) (Geobacter uraniireducens).